Here is a 157-residue protein sequence, read N- to C-terminus: Small ribosomal subunit protein uS17 (157 aa).

This sequence belongs to the universal ribosomal protein uS17 family.

This is Small ribosomal subunit protein uS17 (RPS11) from Dunaliella tertiolecta (Green alga).